Reading from the N-terminus, the 272-residue chain is Putative phosphoenolpyruvate synthase regulatory protein (272 aa).

ADP is bound at residue glycine 152–threonine 159.

The protein belongs to the pyruvate, phosphate/water dikinase regulatory protein family. PSRP subfamily.

The catalysed reaction is [pyruvate, water dikinase] + ADP = [pyruvate, water dikinase]-phosphate + AMP + H(+). It carries out the reaction [pyruvate, water dikinase]-phosphate + phosphate + H(+) = [pyruvate, water dikinase] + diphosphate. Its function is as follows. Bifunctional serine/threonine kinase and phosphorylase involved in the regulation of the phosphoenolpyruvate synthase (PEPS) by catalyzing its phosphorylation/dephosphorylation. The chain is Putative phosphoenolpyruvate synthase regulatory protein from Alcanivorax borkumensis (strain ATCC 700651 / DSM 11573 / NCIMB 13689 / SK2).